The chain runs to 147 residues: 3-hydroxyacyl-[acyl-carrier-protein] dehydratase FabZ (147 aa).

His46 is a catalytic residue.

Belongs to the thioester dehydratase family. FabZ subfamily.

It localises to the cytoplasm. It catalyses the reaction a (3R)-hydroxyacyl-[ACP] = a (2E)-enoyl-[ACP] + H2O. Its function is as follows. Involved in unsaturated fatty acids biosynthesis. Catalyzes the dehydration of short chain beta-hydroxyacyl-ACPs and long chain saturated and unsaturated beta-hydroxyacyl-ACPs. The protein is 3-hydroxyacyl-[acyl-carrier-protein] dehydratase FabZ of Syntrophobacter fumaroxidans (strain DSM 10017 / MPOB).